A 502-amino-acid polypeptide reads, in one-letter code: ATP synthase subunit alpha (502 aa).

The segment at Val115–Met137 is disordered. An ATP-binding site is contributed by Gly169 to Thr176.

Belongs to the ATPase alpha/beta chains family. As to quaternary structure, F-type ATPases have 2 components, CF(1) - the catalytic core - and CF(0) - the membrane proton channel. CF(1) has five subunits: alpha(3), beta(3), gamma(1), delta(1), epsilon(1). CF(0) has three main subunits: a(1), b(2) and c(9-12). The alpha and beta chains form an alternating ring which encloses part of the gamma chain. CF(1) is attached to CF(0) by a central stalk formed by the gamma and epsilon chains, while a peripheral stalk is formed by the delta and b chains.

The protein resides in the cell membrane. It carries out the reaction ATP + H2O + 4 H(+)(in) = ADP + phosphate + 5 H(+)(out). Produces ATP from ADP in the presence of a proton gradient across the membrane. The alpha chain is a regulatory subunit. The sequence is that of ATP synthase subunit alpha from Geobacillus kaustophilus (strain HTA426).